Reading from the N-terminus, the 88-residue chain is Large ribosomal subunit protein eL34 (88 aa).

The tract at residues 41–72 (RPLNGIPRGRPNELRKLPKTKKRPERPMPNLC) is disordered.

Belongs to the eukaryotic ribosomal protein eL34 family.

This Thermococcus sibiricus (strain DSM 12597 / MM 739) protein is Large ribosomal subunit protein eL34.